The sequence spans 195 residues: ATP-dependent Clp protease proteolytic subunit (195 aa).

Ser-98 (nucleophile) is an active-site residue. Residue His-123 is part of the active site.

It belongs to the peptidase S14 family. Fourteen ClpP subunits assemble into 2 heptameric rings which stack back to back to give a disk-like structure with a central cavity, resembling the structure of eukaryotic proteasomes.

Its subcellular location is the cytoplasm. It catalyses the reaction Hydrolysis of proteins to small peptides in the presence of ATP and magnesium. alpha-casein is the usual test substrate. In the absence of ATP, only oligopeptides shorter than five residues are hydrolyzed (such as succinyl-Leu-Tyr-|-NHMec, and Leu-Tyr-Leu-|-Tyr-Trp, in which cleavage of the -Tyr-|-Leu- and -Tyr-|-Trp bonds also occurs).. Functionally, cleaves peptides in various proteins in a process that requires ATP hydrolysis. Has a chymotrypsin-like activity. Plays a major role in the degradation of misfolded proteins. This Helicobacter pylori (strain Shi470) protein is ATP-dependent Clp protease proteolytic subunit.